We begin with the raw amino-acid sequence, 273 residues long: uncharacterized protein (273 aa).

This is an uncharacterized protein from Mycobacterium bovis (strain ATCC BAA-935 / AF2122/97).